We begin with the raw amino-acid sequence, 156 residues long: Deoxyuridine 5'-triphosphate nucleotidohydrolase (156 aa).

This sequence belongs to the dCTP deaminase family. Archaeal dUTPase subfamily. In terms of assembly, homotrimer.

The catalysed reaction is dUTP + H2O = dUMP + diphosphate + H(+). It functions in the pathway pyrimidine metabolism; dUMP biosynthesis; dUMP from dCTP (dUTP route): step 2/2. Its function is as follows. This enzyme is involved in nucleotide metabolism: it produces dUMP, the immediate precursor of thymidine nucleotides and it decreases the intracellular concentration of dUTP so that uracil cannot be incorporated into DNA. The protein is Deoxyuridine 5'-triphosphate nucleotidohydrolase of Methanocaldococcus jannaschii (strain ATCC 43067 / DSM 2661 / JAL-1 / JCM 10045 / NBRC 100440) (Methanococcus jannaschii).